Consider the following 824-residue polypeptide: A-adding tRNA nucleotidyltransferase (824 aa).

CBS domains are found at residues 305–363 and 367–423; these read MNTP…DEPI and VNRD…LEKL. 459-462 is an ATP binding site; the sequence is GVVR. Mg(2+)-binding residues include aspartate 472 and aspartate 474. Residues 545–546, asparagine 550, 590–599, arginine 603, and arginine 632 contribute to the ATP site; these read RD and DPVRILRALR.

The protein belongs to the tRNA nucleotidyltransferase/poly(A) polymerase family. The cofactor is Mg(2+).

The catalysed reaction is a tRNA with a 3' CC end + ATP = a tRNA with a 3' CCA end + diphosphate. TRNA nucleotidyltransferase involved in the synthesis of the tRNA CCA terminus. Adds the terminal adenosine residue to tRNA. Can incorporate CMP into tRNA ending with C74C75 (tRNACC), with very weak efficiency. The protein is A-adding tRNA nucleotidyltransferase of Aquifex aeolicus (strain VF5).